The chain runs to 231 residues: Large ribosomal subunit protein uL1 (231 aa).

Belongs to the universal ribosomal protein uL1 family. In terms of assembly, part of the 50S ribosomal subunit.

Its function is as follows. Binds directly to 23S rRNA. The L1 stalk is quite mobile in the ribosome, and is involved in E site tRNA release. In terms of biological role, protein L1 is also a translational repressor protein, it controls the translation of the L11 operon by binding to its mRNA. The polypeptide is Large ribosomal subunit protein uL1 (Neisseria meningitidis serogroup A / serotype 4A (strain DSM 15465 / Z2491)).